The primary structure comprises 508 residues: Cell division protein FtsZ (508 aa).

Residues 24–28, 111–113, Glu-142, Arg-146, and Asp-190 contribute to the GTP site; these read GAGGN and GTG. Disordered stretches follow at residues 342-389 and 428-508; these read IAET…SAPQ and VAEE…RLAN. The segment covering 464 to 482 has biased composition (low complexity); it reads QQASAPQAQARSAQSARPQ.

It belongs to the FtsZ family. Homodimer. Polymerizes to form a dynamic ring structure in a strictly GTP-dependent manner. Interacts directly with several other division proteins.

The protein localises to the cytoplasm. Essential cell division protein that forms a contractile ring structure (Z ring) at the future cell division site. The regulation of the ring assembly controls the timing and the location of cell division. One of the functions of the FtsZ ring is to recruit other cell division proteins to the septum to produce a new cell wall between the dividing cells. Binds GTP and shows GTPase activity. This Caulobacter vibrioides (strain ATCC 19089 / CIP 103742 / CB 15) (Caulobacter crescentus) protein is Cell division protein FtsZ.